Consider the following 64-residue polypeptide: Conotoxin Pn-B01122 (64 aa).

The signal sequence occupies residues 1–22 (MRCLPVFVILLLLIASAPSVDA). The propeptide occupies 23–48 (RPKTKDDIPLVSFQDNAKRALQILSN).

Belongs to the conotoxin T superfamily. Contains 2 disulfide bonds that can be either 'C1-C3, C2-C4' or 'C1-C4, C2-C3', since these disulfide connectivities have been observed for conotoxins with cysteine framework V (for examples, see AC P0DQQ7 and AC P81755). Expressed by the venom duct.

Its subcellular location is the secreted. The protein is Conotoxin Pn-B01122 of Conus pennaceus (Feathered cone).